Reading from the N-terminus, the 256-residue chain is Coiled-coil domain-containing protein 90B, mitochondrial (256 aa).

Residues 1-42 (MRSRWIWRFLRPDGGGIRWTSTPHGRLSPALRRGFLTTTTKS) constitute a mitochondrion transit peptide. Residues 129-167 (LEKSEFANLRAENEKMKIELDQVKQQLTNETSRIRADNK) are a coiled coil. Residues 231-253 (TIRYLAASVFTCLAIALGFYRFW) traverse the membrane as a helical segment.

Belongs to the CCDC90 family. In terms of assembly, interacts with MCU.

It localises to the mitochondrion membrane. This chain is Coiled-coil domain-containing protein 90B, mitochondrial (Ccdc90b), found in Mus musculus (Mouse).